Here is a 584-residue protein sequence, read N- to C-terminus: UBX domain-containing protein 2 (584 aa).

At 1–80 (MPVVNHEDSE…PTQTSTPMAE (80 aa)) the chain is on the cytoplasmic side. A helical membrane pass occupies residues 81-101 (TLVPPALGPRPLLFTASLPVV). Over 102 to 151 (RPLPANFRNDFRTIGLNGRSNTVWSMFESFSYDGNPFLFILLLIPRIINR) the chain is Lumenal. A helical membrane pass occupies residues 152 to 172 (LSATIFTFFCTLLSLHSISGG). At 173 to 584 (GNSGKPKISK…DEEDEENEEQ (412 aa)) the chain is on the cytoplasmic side. The region spanning 426 to 570 (ETTGKQATLQ…WPNGSLLVEA (145 aa)) is the UBX domain.

Component of the DOA10 ubiquitin ligase complex which contains E3 ligase SSM4/DOA10 and CDC48-binding protein UBX2/SEL1. Component of the HRD1 ubiquitin ligase complex which contains the E3 ligase HRD1, its cofactors HRD3, USA1 and DER1, substrate recruiting factor YOS9 and UBX2. In ERAD-L, HRD3 and YOS9 jointly bind misfolded glycoproteins in the endoplasmic reticulum (ER) lumen. Movement of ERAD-L substrates through the ER membrane is facilitated by HRD1 and DER1 which have lateral gates facing each other and which distort the membrane region between the lateral gates, making it much thinner than a normal phospholipid bilayer. Substrates insert into the membrane as a hairpin loop with one strand interacting with DER1 and the other with HRD1. Both the DOA10 and HRD1 ubiquitin ligase complexes interact with the heterotrimeric CDC48-NPL4-UFD1 ATPase complex which is recruited by UBX2 via its interaction with CDC48 and which moves ubiquitinated substrates to the cytosol for targeting to the proteasome.

Its subcellular location is the endoplasmic reticulum membrane. In terms of biological role, integral endoplasmic reticulum membrane protein that coordinates the assembly of the ER-associated protein degradation (ERAD) machinery at the ER membrane. Mediates binding of CDC48 to the E3 ubiquitin ligases SSM4/DOA10 and HRD1, and to ERAD substrates. Component of the DOA10 ubiquitin ligase complex, which is part of the ERAD-C pathway responsible for the rapid degradation of membrane proteins with misfolded cytoplasmic domains. ERAD-C substrates are ubiquitinated through DOA10 in conjunction with the E2 ubiquitin-conjugating enzymes UBC6 and UBC7-CUE1. Also a component of the HRD1 ubiquitin ligase complex, which is part of the ERAD-L and ERAD-M pathways responsible for the rapid degradation of soluble lumenal and membrane proteins with misfolded lumenal domains (ERAD-L), or ER-membrane proteins with misfolded transmembrane domains (ERAD-M). ERAD-L substrates are ubiquitinated through HRD1 in conjunction with the E2 ubiquitin-conjugating enzymes UBC1 and UBC7-CUE1. Ubiquitinated substrates are then removed to the cytosol via the action of the CDC48-NPL4-UFD1 ATPase complex and targeted to the proteasome. The sequence is that of UBX domain-containing protein 2 (UBX2) from Saccharomyces cerevisiae (strain ATCC 204508 / S288c) (Baker's yeast).